Consider the following 224-residue polypeptide: Small ribosomal subunit protein uS3 (224 aa).

The KH type-2 domain occupies 39–107 (IREFLKKKPS…DVWVEIAEVK (69 aa)).

This sequence belongs to the universal ribosomal protein uS3 family. Part of the 30S ribosomal subunit. Forms a tight complex with proteins S10 and S14.

Its function is as follows. Binds the lower part of the 30S subunit head. Binds mRNA in the 70S ribosome, positioning it for translation. In Chlamydia trachomatis serovar A (strain ATCC VR-571B / DSM 19440 / HAR-13), this protein is Small ribosomal subunit protein uS3.